Here is a 274-residue protein sequence, read N- to C-terminus: 2,3,4,5-tetrahydropyridine-2,6-dicarboxylate N-succinyltransferase (274 aa).

The substrate site is built by R104 and D141.

This sequence belongs to the transferase hexapeptide repeat family. In terms of assembly, homotrimer.

It localises to the cytoplasm. The catalysed reaction is (S)-2,3,4,5-tetrahydrodipicolinate + succinyl-CoA + H2O = (S)-2-succinylamino-6-oxoheptanedioate + CoA. It functions in the pathway amino-acid biosynthesis; L-lysine biosynthesis via DAP pathway; LL-2,6-diaminopimelate from (S)-tetrahydrodipicolinate (succinylase route): step 1/3. This is 2,3,4,5-tetrahydropyridine-2,6-dicarboxylate N-succinyltransferase from Yersinia pestis.